A 1131-amino-acid chain; its full sequence is Filamin A-interacting protein 1-like (1131 aa).

A disordered region spans residues 1–62 (MRSRSSNAEG…KSHTGKGHHT (62 aa)). The segment covering 50-62 (VSEKSHTGKGHHT) has biased composition (basic and acidic residues). Coiled-coil stretches lie at residues 139–583 (NELD…LSKV) and 610–780 (SKST…KSLR). At Ser789 the chain carries Phosphoserine. Phosphothreonine occurs at positions 984 and 992. Ser1050 bears the Phosphoserine mark.

This sequence belongs to the FILIP1 family.

It is found in the cytoplasm. The protein resides in the membrane. Its subcellular location is the nucleus. Its function is as follows. Acts as a regulator of the antiangiogenic activity on endothelial cells. When overexpressed in endothelial cells, leads to inhibition of cell proliferation and migration and an increase in apoptosis. Inhibits melanoma growth When expressed in tumor-associated vasculature. In Mus musculus (Mouse), this protein is Filamin A-interacting protein 1-like (Filip1l).